We begin with the raw amino-acid sequence, 444 residues long: C4-dicarboxylate transport protein 3 (444 aa).

9 helical membrane passes run 22–42 (VLYV…WLWP), 60–80 (LIKM…IAHI), 95–115 (VYFE…GNLV), 162–182 (GEIL…MSLG), 198–218 (AVFG…FGAM), 236–256 (LIAT…GIIA), 321–341 (IYMT…LSFG), 346–366 (ILVV…AGFI), and 399–419 (LTNL…EGEL).

It belongs to the dicarboxylate/amino acid:cation symporter (DAACS) (TC 2.A.23) family.

It localises to the cell inner membrane. Its function is as follows. Responsible for the transport of dicarboxylates such as succinate, fumarate, and malate from the periplasm across the membrane. This chain is C4-dicarboxylate transport protein 3, found in Bradyrhizobium diazoefficiens (strain JCM 10833 / BCRC 13528 / IAM 13628 / NBRC 14792 / USDA 110).